Consider the following 119-residue polypeptide: Probable prefoldin subunit 6 (119 aa).

This sequence belongs to the prefoldin subunit beta family. As to quaternary structure, heterohexamer of two PFD-alpha type and four PFD-beta type subunits. May interact with MSP1.

Its function is as follows. Binds specifically to cytosolic chaperonin (c-CPN) and transfers target proteins to it. Binds to nascent polypeptide chain and promotes folding in an environment in which there are many competing pathways for nonnative proteins. The polypeptide is Probable prefoldin subunit 6 (Plasmodium falciparum (isolate 3D7)).